We begin with the raw amino-acid sequence, 121 residues long: Large ribosomal subunit protein uL18 (121 aa).

It belongs to the universal ribosomal protein uL18 family. As to quaternary structure, part of the 50S ribosomal subunit; part of the 5S rRNA/L5/L18/L25 subcomplex. Contacts the 5S and 23S rRNAs.

Its function is as follows. This is one of the proteins that bind and probably mediate the attachment of the 5S RNA into the large ribosomal subunit, where it forms part of the central protuberance. The sequence is that of Large ribosomal subunit protein uL18 from Desulfotalea psychrophila (strain LSv54 / DSM 12343).